The sequence spans 743 residues: Keratin, type I cytoskeletal 9 (743 aa).

The segment covering 1 to 16 (MSCRQSSSSFWSSSSS) has biased composition (low complexity). The disordered stretch occupies residues 1–46 (MSCRQSSSSFWSSSSSCGGGGGRGGSGGSMRSSFSRSSRAGGGGGG). Positions 1-130 (MSCRQSSSSF…GGEGGILNTN (130 aa)) are head. Phosphoserine occurs at positions 14 and 16. Residues 17 to 28 (CGGGGGRGGSGG) are compositionally biased toward gly residues. The span at 29 to 39 (SMRSSFSRSSR) shows a compositional bias: low complexity. Phosphoserine is present on residues Ser-55 and Ser-155. The tract at residues 131 to 166 (EKIVMQNLNSRLASYMEKVLELEESNTAMEKQIQDW) is coil 1A. One can recognise an IF rod domain in the interval 131 to 443 (EKIVMQNLNS…ELLEGGQQDF (313 aa)). The interval 167-185 (YSKRGPKVFQKDNTHYYDT) is linker 1. A coil 1B region spans residues 186-277 (IEDLKDRIVD…KNHKEEMSQL (92 aa)). Positions 278 to 300 (TGQNDGDVNVEINVAPSTDLTRV) are linker 12. The coil 2 stretch occupies residues 301–439 (LNDMREEYEQ…ETYRELLEGG (139 aa)). Disordered stretches follow at residues 440–468 (QQDFESSGAGQIGFGSGKGRQRGSGGSYG) and 501–743 (GGSG…KMRY). The tract at residues 440–709 (QQDFESSGAG…GGGSGSGGGS (270 aa)) is tail. Composition is skewed to gly residues over residues 449–468 (GQIGFGSGKGRQRGSGGSYG) and 501–717 (GGSG…GGGN).

This sequence belongs to the intermediate filament family. In terms of assembly, heterotetramer of two type I and two type II keratins. As to expression, expressed in footpad epidermis and testis (at protein level).

Its function is as follows. May serve an important special function either in the mature palmar and plantar skin tissue or in the morphogenetic program of the formation of these tissues. Plays a role in keratin filament assembly. Plays an essential role in the correct development of sperm. This chain is Keratin, type I cytoskeletal 9, found in Mus musculus (Mouse).